The primary structure comprises 64 residues: Myotoxin-2 (64 aa).

The signal sequence occupies residues 1–21 (KILYLLFAFLFLAFLSEPGNA). Cys-32 and Cys-51 are disulfide-bonded.

Belongs to the crotamine-myotoxin family. Monomer. As to expression, expressed by the venom gland.

Its subcellular location is the secreted. In terms of biological role, cationic peptide that possesses multiple functions. It acts as a cell-penetrating peptide (CPP), and as a potent voltage-gated potassium channel (Kv) inhibitor. It exhibits antimicrobial activities, hind limb paralysis, and severe muscle necrosis by a non-enzymatic mechanism. This is Myotoxin-2 from Crotalus durissus terrificus (South American rattlesnake).